Here is a 296-residue protein sequence, read N- to C-terminus: Cytidine deaminase (296 aa).

2 consecutive CMP/dCMP-type deaminase domains span residues 47–167 (SQDE…FGPA) and 186–296 (ESAD…VDPV). 88-90 (NLE) is a substrate binding site. Position 101 (His101) interacts with Zn(2+). Glu103 acts as the Proton donor in catalysis. The Zn(2+) site is built by Cys128 and Cys131.

It belongs to the cytidine and deoxycytidylate deaminase family. Homodimer. It depends on Zn(2+) as a cofactor.

It carries out the reaction cytidine + H2O + H(+) = uridine + NH4(+). The enzyme catalyses 2'-deoxycytidine + H2O + H(+) = 2'-deoxyuridine + NH4(+). Its function is as follows. This enzyme scavenges exogenous and endogenous cytidine and 2'-deoxycytidine for UMP synthesis. The sequence is that of Cytidine deaminase from Shewanella loihica (strain ATCC BAA-1088 / PV-4).